Here is a 990-residue protein sequence, read N- to C-terminus: Presequence protease, mitochondrial (990 aa).

A mitochondrion-targeting transit peptide spans 1–56; it reads MLRFQRTVPRVAIRRLANVYSEGAVLHGYKVRRAQEIPEMRMAAVELEHEMTGARH. His84 contributes to the Zn(2+) binding site. Glu87 functions as the Proton acceptor in the catalytic mechanism. His88 is a binding site for Zn(2+). Glu160 is a catalytic residue. Glu185 contributes to the Zn(2+) binding site.

This sequence belongs to the peptidase M16 family. PreP subfamily. Monomer and homodimer; homodimerization is induced by binding of the substrate. Zn(2+) serves as cofactor.

The protein localises to the mitochondrion intermembrane space. Its subcellular location is the mitochondrion matrix. Degrades mitochondrial transit peptides after their cleavage in the intermembrane space or in the matrix, and presequence peptides; clearance of these peptides is required to keep the presequence processing machinery running. Preferentially cleaves the N-terminal side of paired basic amino acid residues. Also degrades other unstructured peptides. May function as an ATP-dependent peptidase as opposed to a metalloendopeptidase. The chain is Presequence protease, mitochondrial (CYM1) from Eremothecium gossypii (strain ATCC 10895 / CBS 109.51 / FGSC 9923 / NRRL Y-1056) (Yeast).